A 481-amino-acid chain; its full sequence is ATP synthase subunit alpha (481 aa).

Residue 145–152 (GDRQTGKT) participates in ATP binding.

Belongs to the ATPase alpha/beta chains family. In terms of assembly, F-type ATPases have 2 components, CF(1) - the catalytic core - and CF(0) - the membrane proton channel. CF(1) has five subunits: alpha(3), beta(3), gamma(1), delta(1), epsilon(1). CF(0) has three main subunits: a(1), b(2) and c(9-12). The alpha and beta chains form an alternating ring which encloses part of the gamma chain. CF(1) is attached to CF(0) by a central stalk formed by the gamma and epsilon chains, while a peripheral stalk is formed by the delta and b chains.

It is found in the cell membrane. It carries out the reaction ATP + H2O + 4 H(+)(in) = ADP + phosphate + 5 H(+)(out). Produces ATP from ADP in the presence of a proton gradient across the membrane. The alpha chain is a regulatory subunit. The chain is ATP synthase subunit alpha from Carsonella ruddii (strain PV).